A 248-amino-acid chain; its full sequence is Anamorsin homolog (248 aa).

An N-terminal SAM-like domain region spans residues Phe4–Phe129. The linker stretch occupies residues Ala130–Lys161. 4 residues coordinate [2Fe-2S] cluster: Cys172, Cys181, Cys184, and Cys186. The interval Cys172 to Cys186 is fe-S binding site A. Cys209, Cys212, Cys220, and Cys223 together coordinate [4Fe-4S] cluster. 2 consecutive short sequence motifs (cx2C motif) follow at residues Cys209 to Cys212 and Cys220 to Cys223. Residues Cys209–Cys223 form a fe-S binding site B region.

This sequence belongs to the anamorsin family. Monomer. Requires [2Fe-2S] cluster as cofactor. [4Fe-4S] cluster serves as cofactor.

It is found in the cytoplasm. It localises to the mitochondrion intermembrane space. In terms of biological role, component of the cytosolic iron-sulfur (Fe-S) protein assembly (CIA) machinery. Required for the maturation of extramitochondrial Fe-S proteins. Part of an electron transfer chain functioning in an early step of cytosolic Fe-S biogenesis, facilitating the de novo assembly of a [4Fe-4S] cluster on the cytosolic Fe-S scaffold complex. Electrons are transferred from NADPH via a FAD- and FMN-containing diflavin oxidoreductase. Together with the diflavin oxidoreductase, also required for the assembly of the diferric tyrosyl radical cofactor of ribonucleotide reductase (RNR), probably by providing electrons for reduction during radical cofactor maturation in the catalytic small subunit. The polypeptide is Anamorsin homolog (Drosophila erecta (Fruit fly)).